The sequence spans 505 residues: uncharacterized protein (505 aa).

The segment covering 1–16 has biased composition (polar residues); the sequence is MPPTASLTRSPPTASQ. A disordered region spans residues 1 to 474; sequence MPPTASLTRS…TPPTASLTRT (474 aa). 2 stretches are compositionally biased toward low complexity: residues 17–33 and 40–59; these read TRTL…PRAS and TASL…PPRA. Polar residues predominate over residues 66–78; sequence SRASLTRTLSRAS. Composition is skewed to low complexity over residues 96–122, 129–140, and 147–158; these read SLTR…PPRT, PRTSQTRTPPRA, and SRASRTRTPPRA. Composition is skewed to polar residues over residues 165 to 177 and 188 to 200; these read SRAS…SRAS and TRTP…TRTP. The span at 201-226 shows a compositional bias: low complexity; sequence PTASLTRASRTRTPPRTSQTRTPPRA. 7 stretches are compositionally biased toward polar residues: residues 233 to 254, 265 to 293, 309 to 329, 345 to 365, 373 to 383, 399 to 408, and 435 to 448; these read SRAS…SRAS, TRTP…SLTR, LTRT…SLTR, TRTPSRASLTR, LTRSPPTASL, and LTRS…TRTP. Residues 453 to 474 show a composition bias toward low complexity; sequence LRRTPPRTSLTRTPPTASLTRT.

This is an uncharacterized protein from Homo sapiens (Human).